The chain runs to 201 residues: Small ribosomal subunit protein uS4c (201 aa).

The tract at residues Leu-15–Tyr-45 is disordered. Residues His-35–Tyr-45 are compositionally biased toward basic and acidic residues. The S4 RNA-binding domain maps to Met-90–Leu-153.

The protein belongs to the universal ribosomal protein uS4 family. Part of the 30S ribosomal subunit. Contacts protein S5. The interaction surface between S4 and S5 is involved in control of translational fidelity.

The protein localises to the plastid. It is found in the chloroplast. Its function is as follows. One of the primary rRNA binding proteins, it binds directly to 16S rRNA where it nucleates assembly of the body of the 30S subunit. With S5 and S12 plays an important role in translational accuracy. This Pyropia yezoensis (Susabi-nori) protein is Small ribosomal subunit protein uS4c (rps4).